The chain runs to 340 residues: Ketol-acid reductoisomerase (NADP(+)) (340 aa).

A KARI N-terminal Rossmann domain is found at 1-182 (MRVYYDRDCD…GGGRSGIIET (182 aa)). NADP(+)-binding positions include 24-27 (YGSQ), R48, S51, S53, and 83-86 (DELQ). H108 is an active-site residue. G134 provides a ligand contact to NADP(+). The KARI C-terminal knotted domain maps to 183–329 (NFREECETDL…AKLREMMPWI (147 aa)). D191, E195, E227, and E231 together coordinate Mg(2+). S252 lines the substrate pocket.

It belongs to the ketol-acid reductoisomerase family. The cofactor is Mg(2+).

It catalyses the reaction (2R)-2,3-dihydroxy-3-methylbutanoate + NADP(+) = (2S)-2-acetolactate + NADPH + H(+). The enzyme catalyses (2R,3R)-2,3-dihydroxy-3-methylpentanoate + NADP(+) = (S)-2-ethyl-2-hydroxy-3-oxobutanoate + NADPH + H(+). It functions in the pathway amino-acid biosynthesis; L-isoleucine biosynthesis; L-isoleucine from 2-oxobutanoate: step 2/4. The protein operates within amino-acid biosynthesis; L-valine biosynthesis; L-valine from pyruvate: step 2/4. Involved in the biosynthesis of branched-chain amino acids (BCAA). Catalyzes an alkyl-migration followed by a ketol-acid reduction of (S)-2-acetolactate (S2AL) to yield (R)-2,3-dihydroxy-isovalerate. In the isomerase reaction, S2AL is rearranged via a Mg-dependent methyl migration to produce 3-hydroxy-3-methyl-2-ketobutyrate (HMKB). In the reductase reaction, this 2-ketoacid undergoes a metal-dependent reduction by NADPH to yield (R)-2,3-dihydroxy-isovalerate. The polypeptide is Ketol-acid reductoisomerase (NADP(+)) (Ruegeria sp. (strain TM1040) (Silicibacter sp.)).